The primary structure comprises 171 residues: Xanthine-guanine phosphoribosyltransferase (171 aa).

5-phospho-alpha-D-ribose 1-diphosphate is bound by residues 51–52 and 106–114; these read RG and DDLVDSGKT. A Mg(2+)-binding site is contributed by D107. Guanine-binding residues include D110 and I153. Residues D110 and I153 each coordinate xanthine. GMP contacts are provided by residues 110-114 and 152-153; these read DSGKT and WI.

It belongs to the purine/pyrimidine phosphoribosyltransferase family. XGPT subfamily. In terms of assembly, homotetramer. Mg(2+) is required as a cofactor.

It is found in the cell inner membrane. The enzyme catalyses GMP + diphosphate = guanine + 5-phospho-alpha-D-ribose 1-diphosphate. It catalyses the reaction XMP + diphosphate = xanthine + 5-phospho-alpha-D-ribose 1-diphosphate. It carries out the reaction IMP + diphosphate = hypoxanthine + 5-phospho-alpha-D-ribose 1-diphosphate. The protein operates within purine metabolism; GMP biosynthesis via salvage pathway; GMP from guanine: step 1/1. It functions in the pathway purine metabolism; XMP biosynthesis via salvage pathway; XMP from xanthine: step 1/1. Functionally, purine salvage pathway enzyme that catalyzes the transfer of the ribosyl-5-phosphate group from 5-phospho-alpha-D-ribose 1-diphosphate (PRPP) to the N9 position of the 6-oxopurines guanine and xanthine to form the corresponding ribonucleotides GMP (guanosine 5'-monophosphate) and XMP (xanthosine 5'-monophosphate), with the release of PPi. To a lesser extent, also acts on hypoxanthine. This chain is Xanthine-guanine phosphoribosyltransferase, found in Ruegeria pomeroyi (strain ATCC 700808 / DSM 15171 / DSS-3) (Silicibacter pomeroyi).